A 234-amino-acid chain; its full sequence is Accessory gland protein Acp29AB (234 aa).

An N-terminal signal peptide occupies residues 1 to 21; sequence MYATNLLYLLALWNLWLVSGG. N-linked (GlcNAc...) asparagine glycans are attached at residues Asn-29, Asn-61, Asn-127, and Asn-164. The C-type lectin domain maps to 137-234; the sequence is VTCREMNGHL…SFVCQANQWA (98 aa). 2 cysteine pairs are disulfide-bonded: Cys-139/Cys-228 and Cys-207/Cys-220.

The protein resides in the secreted. Its function is as follows. Responsible for physiological and behavioral changes in mated female flies. The sequence is that of Accessory gland protein Acp29AB (Acp29AB) from Drosophila simulans (Fruit fly).